The sequence spans 445 residues: KIN17-like protein (445 aa).

The segment at 26 to 50 (WYCQLCEKQCRDENGFKCHISSESH) adopts a C2H2-type zinc-finger fold. Low complexity-rich tracts occupy residues 215-229 (NTTTTTTNTTTTTTN) and 239-253 (NDNNSSNNNYNDQTN). A disordered region spans residues 215–256 (NTTTTTTNTTTTTTNKNIFDKLKTNDNNSSNNNYNDQTNPKP).

It belongs to the KIN17 family.

The sequence is that of KIN17-like protein from Dictyostelium discoideum (Social amoeba).